The sequence spans 291 residues: Farnesyl diphosphate synthase (291 aa).

Residues lysine 44, arginine 47, and histidine 76 each contribute to the isopentenyl diphosphate site. Aspartate 83 and aspartate 89 together coordinate Mg(2+). Arginine 94 is a (2E)-geranyl diphosphate binding site. Residue arginine 95 coordinates isopentenyl diphosphate. (2E)-geranyl diphosphate-binding residues include lysine 177, threonine 178, glutamine 215, and lysine 232.

It belongs to the FPP/GGPP synthase family. Requires Mg(2+) as cofactor.

It localises to the cytoplasm. It catalyses the reaction isopentenyl diphosphate + (2E)-geranyl diphosphate = (2E,6E)-farnesyl diphosphate + diphosphate. This is Farnesyl diphosphate synthase (fps) from Micrococcus luteus (Micrococcus lysodeikticus).